Consider the following 181-residue polypeptide: ATP-dependent protease subunit HslV (181 aa).

Residue Thr-5 is part of the active site. Na(+)-binding residues include Ala-161, Cys-164, and Thr-167.

This sequence belongs to the peptidase T1B family. HslV subfamily. As to quaternary structure, a double ring-shaped homohexamer of HslV is capped on each side by a ring-shaped HslU homohexamer. The assembly of the HslU/HslV complex is dependent on binding of ATP.

Its subcellular location is the cytoplasm. It catalyses the reaction ATP-dependent cleavage of peptide bonds with broad specificity.. With respect to regulation, allosterically activated by HslU binding. Its function is as follows. Protease subunit of a proteasome-like degradation complex believed to be a general protein degrading machinery. The protein is ATP-dependent protease subunit HslV of Sulfurimonas denitrificans (strain ATCC 33889 / DSM 1251) (Thiomicrospira denitrificans (strain ATCC 33889 / DSM 1251)).